Here is a 133-residue protein sequence, read N- to C-terminus: Large ribosomal subunit protein bL19 (133 aa).

The protein belongs to the bacterial ribosomal protein bL19 family.

Functionally, this protein is located at the 30S-50S ribosomal subunit interface and may play a role in the structure and function of the aminoacyl-tRNA binding site. This Sulfurihydrogenibium sp. (strain YO3AOP1) protein is Large ribosomal subunit protein bL19.